Reading from the N-terminus, the 175-residue chain is Trafficking protein particle complex subunit 20 (175 aa).

It belongs to the TRAPP small subunits family. Sedlin subfamily. Part of the multisubunit TRAPP (transport protein particle) I complex composed of BET3, BET5, TRS20, TRS23, TRS31 and TRS33. Part of the multisubunit TRAPP (transport protein particle) II complex composed of BET3, BET5, TRS20, TRS23, TRS31, TRS33, TRS65, TRS85, TRS120 and TRS130. Part of the multisubunit TRAPP (transport protein particle) III complex composed of BET3, BET5, TRS20, TRS23, TRS31, TRS33 and TRS85.

It localises to the golgi apparatus. Its subcellular location is the cis-Golgi network. The protein localises to the endoplasmic reticulum. It is found in the preautophagosomal structure. Component of the TRAPP I, TRAPP II and TRAPP III complexes which act as guanine nucleotide exchange factors (GEF) for YPT1. TRAPP I plays a key role in the late stages of endoplasmic reticulum to Golgi traffic. TRAPP II plays a role in intra-Golgi transport. TRAPP III plays a role in autophagosome formation. In Saccharomyces cerevisiae (strain ATCC 204508 / S288c) (Baker's yeast), this protein is Trafficking protein particle complex subunit 20 (TRS20).